A 549-amino-acid polypeptide reads, in one-letter code: FMRFamide receptor (549 aa).

Residues 1-117 are Extracellular-facing; it reads MSGTAVARLL…NNRIEFWVCG (117 aa). Residues asparagine 59, asparagine 70, and asparagine 93 are each glycosylated (N-linked (GlcNAc...) asparagine). A helical transmembrane segment spans residues 118 to 138; that stretch reads VLINIVGVLGILGNIISMIIL. Topologically, residues 139–158 are cytoplasmic; it reads SRPQMRSSINYLLTGLARCD. A helical membrane pass occupies residues 159-179; it reads TVLIITSILLFGIPSIYPYTG. At 180-181 the chain is on the extracellular side; the sequence is HF. The chain crosses the membrane as a helical span at residues 182–202; the sequence is FGYYNYVYPFISPAVFPIGMI. Topologically, residues 203–238 are cytoplasmic; it reads AQTASIYMTFTVTLERYVAVCHPLKARALCTYGRAK. A helical transmembrane segment spans residues 239–259; it reads IYFIVCVCFSLAYNMPRFWEV. Topologically, residues 260–289 are extracellular; it reads LTVTYPEPGKDVILHCVRPSRLRRSETYIN. Residues 290 to 310 traverse the membrane as a helical segment; it reads IYIHWCYLIVNYIIPFLTLAI. Residues 311 to 341 are Cytoplasmic-facing; that stretch reads LNCLIYRQVKRANRERQRLSRSEKREIGLAT. The chain crosses the membrane as a helical span at residues 342-362; the sequence is MLLCVVIVFFMLNFLPLVLNI. Over 363–376 the chain is Extracellular; the sequence is SEAFYSTIDHKITK. The chain crosses the membrane as a helical span at residues 377–397; sequence ISNLLITINSSVNFLIYIIFG. At 398–549 the chain is on the cytoplasmic side; the sequence is EKFKRIFLLI…KKLGHVSSGF (152 aa).

The protein belongs to the G-protein coupled receptor 1 family. In terms of tissue distribution, expressed in ovaries, heads and bodies. Expressed in dopaminergic neurons.

Its subcellular location is the cell membrane. A receptor for the FMRFamide peptides. Reacts with high affinity to FMRFamide and intrinsic FMRFamide-related peptides. By stimulating intracellular calcium signaling through the inositol 1,4,5-trisphosphate receptor, Itpr, in dopaminergic neurons, may be involved in the maintenance of neuronal excitability and in the regulation of flight bout duration. The protein is FMRFamide receptor of Drosophila melanogaster (Fruit fly).